A 373-amino-acid chain; its full sequence is Chaperone protein DnaJ (373 aa).

Residues 5–71 form the J domain; it reads DYYEILGVSR…EKRAMYDKFG (67 aa). A CR-type zinc finger spans residues 144–226; that stretch reads GVKIPLEYDR…CGGTGRIRKR (83 aa). Zn(2+)-binding residues include cysteine 157, cysteine 160, cysteine 174, cysteine 177, cysteine 200, cysteine 203, cysteine 214, and cysteine 217. CXXCXGXG motif repeat units follow at residues 157-164, 174-181, 200-207, and 214-221; these read CEHCHGEG, CPKCHGTG, CNQCGGTG, and CRVCGGTG.

Belongs to the DnaJ family. As to quaternary structure, homodimer. Zn(2+) is required as a cofactor.

Its subcellular location is the cytoplasm. Its function is as follows. Participates actively in the response to hyperosmotic and heat shock by preventing the aggregation of stress-denatured proteins and by disaggregating proteins, also in an autonomous, DnaK-independent fashion. Unfolded proteins bind initially to DnaJ; upon interaction with the DnaJ-bound protein, DnaK hydrolyzes its bound ATP, resulting in the formation of a stable complex. GrpE releases ADP from DnaK; ATP binding to DnaK triggers the release of the substrate protein, thus completing the reaction cycle. Several rounds of ATP-dependent interactions between DnaJ, DnaK and GrpE are required for fully efficient folding. Also involved, together with DnaK and GrpE, in the DNA replication of plasmids through activation of initiation proteins. The sequence is that of Chaperone protein DnaJ from Thermosipho melanesiensis (strain DSM 12029 / CIP 104789 / BI429).